Here is a 328-residue protein sequence, read N- to C-terminus: D-cysteine desulfhydrase (328 aa).

Position 51 is an N6-(pyridoxal phosphate)lysine (Lys51).

It belongs to the ACC deaminase/D-cysteine desulfhydrase family. In terms of assembly, homodimer. The cofactor is pyridoxal 5'-phosphate.

It catalyses the reaction D-cysteine + H2O = hydrogen sulfide + pyruvate + NH4(+) + H(+). Its function is as follows. Catalyzes the alpha,beta-elimination reaction of D-cysteine and of several D-cysteine derivatives. It could be a defense mechanism against D-cysteine. The protein is D-cysteine desulfhydrase of Escherichia coli O157:H7.